We begin with the raw amino-acid sequence, 137 residues long: Mediator of RNA polymerase II transcription subunit 21 (137 aa).

The tract at residues 37-56 (PKDTIAPSKADQPPEVDTLP) is disordered. The stretch at 87–130 (GLDNSEQDQLQSIKELEEELNVAEKQRQEAVKEKDEVLVKLDQT) forms a coiled coil.

Belongs to the Mediator complex subunit 21 family. As to quaternary structure, component of the Mediator complex.

Its subcellular location is the nucleus. Its function is as follows. Component of the Mediator complex, a coactivator involved in the regulated transcription of nearly all RNA polymerase II-dependent genes. Mediator functions as a bridge to convey information from gene-specific regulatory proteins to the basal RNA polymerase II transcription machinery. Mediator is recruited to promoters by direct interactions with regulatory proteins and serves as a scaffold for the assembly of a functional preinitiation complex with RNA polymerase II and the general transcription factors. The protein is Mediator of RNA polymerase II transcription subunit 21 (srb-7) of Neurospora crassa (strain ATCC 24698 / 74-OR23-1A / CBS 708.71 / DSM 1257 / FGSC 987).